A 602-amino-acid chain; its full sequence is DNA mismatch repair protein MutL (602 aa).

The protein belongs to the DNA mismatch repair MutL/HexB family.

In terms of biological role, this protein is involved in the repair of mismatches in DNA. It is required for dam-dependent methyl-directed DNA mismatch repair. May act as a 'molecular matchmaker', a protein that promotes the formation of a stable complex between two or more DNA-binding proteins in an ATP-dependent manner without itself being part of a final effector complex. This chain is DNA mismatch repair protein MutL, found in Geotalea uraniireducens (strain Rf4) (Geobacter uraniireducens).